The primary structure comprises 524 residues: REH2-associated factor 1 (524 aa).

The N-terminal 22 residues, Met1 to Arg22, are a transit peptide targeting the mitochondrion. Residues Ala48–His70 form a C2H2-type 1; atypical zinc finger. A C2H2-type 2; atypical zinc finger spans residues Tyr121–His147. Residues Phe226–His249 form a C2H2-type 4 zinc finger. Residues Val286–His312 form a C2H2-type 3; atypical zinc finger. C2H2-type zinc fingers lie at residues Phe334–His357, Trp376–His399, His406–His429, and Val443–His465. Positions Val463–Ser524 are disordered. Residues Ala479–Ala500 are compositionally biased toward low complexity.

Component of the REH2-associated complex (REH2C) composed of helicase REH2, associated factors H2F1 and H2F2, and mRNAs at various editing stages; the formation of the complex is RNA-independent. Within the complex, interacts with REH2; the interaction is direct. Interacts with various editing complexes including the RNA editing core (RECC) complex, the gRNA-binding (GRBC) complex (also known as the MRB1 complex) and the RNA editing mediator (REMC) complex.

Its subcellular location is the mitochondrion. In terms of biological role, plays an important role in mitochondrial mRNA editing by promoting the assembly of the mRNA editosome. Facilitates the recruitment of mRNA to the REH2C complex and promotes the interaction between various editing complexes including REH2C, GRBC, REMC and RECC complexes. In Trypanosoma brucei brucei (strain 927/4 GUTat10.1), this protein is REH2-associated factor 1.